Here is a 319-residue protein sequence, read N- to C-terminus: MKKIAVLTSGGDAPGMNAAVRAVVRYGVRHGLEVIGVRRGYSGLIDGDFVKLEYKDVAGITEKGGTILRTSRCEEFKTEEGRELAAKQIKKHGIEGLVVIGGEGSLTGAHLLYEEHKIPVVGIPATIDNDIGLTDMCIGVDTCLNTVMDAVQKLKDTASSHERAFIVEVMGRHSGYIALMAGLVTGAEAIIVPEIPVDYSQLADRILEERRRGKINSIIIVAEGAASAYTVARHLEYRIGYETRITILGHVQRGGSPTASDRRLALSMGVEAVDALLDGEVDVMIALQGNKLVRVPIMEALSTKKTIDKKLYEIAYMLS.

ATP is bound at residue Gly11. An ADP-binding site is contributed by 21-25 (RAVVR). ATP is bound by residues 72–73 (RC) and 102–105 (GEGS). Glu103 serves as a coordination point for Mg(2+). Position 126 to 128 (126 to 128 (TID)) interacts with substrate. The active-site Proton acceptor is the Asp128. Lys155 contributes to the ADP binding site. Substrate-binding positions include Arg163 and 170–172 (MGR). ADP is bound by residues 186–188 (GAE), Arg212, and 214–216 (KIN). Substrate is bound by residues Glu223, Arg244, and 250–253 (HVQR).

It belongs to the phosphofructokinase type A (PFKA) family. ATP-dependent PFK group I subfamily. Prokaryotic clade 'B1' sub-subfamily. As to quaternary structure, homotetramer. Mg(2+) is required as a cofactor.

It is found in the cytoplasm. It carries out the reaction beta-D-fructose 6-phosphate + ATP = beta-D-fructose 1,6-bisphosphate + ADP + H(+). The protein operates within carbohydrate degradation; glycolysis; D-glyceraldehyde 3-phosphate and glycerone phosphate from D-glucose: step 3/4. With respect to regulation, allosterically activated by ADP and other diphosphonucleosides, and allosterically inhibited by phosphoenolpyruvate. Functionally, catalyzes the phosphorylation of D-fructose 6-phosphate to fructose 1,6-bisphosphate by ATP, the first committing step of glycolysis. This chain is ATP-dependent 6-phosphofructokinase, found in Thermotoga petrophila (strain ATCC BAA-488 / DSM 13995 / JCM 10881 / RKU-1).